A 177-amino-acid chain; its full sequence is Large ribosomal subunit protein uL6 (177 aa).

It belongs to the universal ribosomal protein uL6 family. As to quaternary structure, part of the 50S ribosomal subunit.

This protein binds to the 23S rRNA, and is important in its secondary structure. It is located near the subunit interface in the base of the L7/L12 stalk, and near the tRNA binding site of the peptidyltransferase center. The sequence is that of Large ribosomal subunit protein uL6 from Neisseria gonorrhoeae (strain ATCC 700825 / FA 1090).